A 179-amino-acid polypeptide reads, in one-letter code: ATP-dependent protease subunit HslV (179 aa).

Residue threonine 7 is part of the active site. Na(+) is bound by residues glycine 162, cysteine 165, and threonine 168.

This sequence belongs to the peptidase T1B family. HslV subfamily. A double ring-shaped homohexamer of HslV is capped on each side by a ring-shaped HslU homohexamer. The assembly of the HslU/HslV complex is dependent on binding of ATP.

It localises to the cytoplasm. The enzyme catalyses ATP-dependent cleavage of peptide bonds with broad specificity.. With respect to regulation, allosterically activated by HslU binding. Functionally, protease subunit of a proteasome-like degradation complex believed to be a general protein degrading machinery. In Aromatoleum aromaticum (strain DSM 19018 / LMG 30748 / EbN1) (Azoarcus sp. (strain EbN1)), this protein is ATP-dependent protease subunit HslV.